We begin with the raw amino-acid sequence, 357 residues long: Alpha-2-macroglobulin receptor-associated protein (357 aa).

The signal sequence occupies residues 1 to 34; the sequence is MAPRRVRSFLRGLPALLLLLLFLGPWPAASHGGK. The disordered stretch occupies residues 32–52; sequence GGKYSREKNQPKPSPKRESGE. Positions 35–52 are enriched in basic and acidic residues; it reads YSREKNQPKPSPKRESGE. A phosphoserine mark is found at serine 50 and serine 135. A coiled-coil region spans residues 219 to 310; sequence SRHTELKEKL…AHEKLRHAES (92 aa). Residues 237–353 form an LDL receptor binding region; it reads RLRRVSHQGY…DLSGRISRAR (117 aa). A Phosphothreonine modification is found at threonine 248. Residue asparagine 268 is glycosylated (N-linked (GlcNAc...) asparagine). Positions 354 to 357 match the Prevents secretion from ER motif; that stretch reads HNEL.

It belongs to the alpha-2-MRAP family. As to quaternary structure, interacts with the LRP1/alpha-2-macroglobulin receptor heavy and light chains; the interaction is transient and coincides with a reduction of ligand binding by the receptor. Interacts with LRP2/glycoprotein 330. Interacts with LRP1B; binding is followed by internalization and degradation. Interacts with LDLR. Interacts with SORL1. Interacts with LRP1; this interaction is followed by rapid internalization. Post-translationally, N-glycosylated.

It is found in the rough endoplasmic reticulum lumen. The protein resides in the endoplasmic reticulum-Golgi intermediate compartment lumen. It localises to the golgi apparatus. Its subcellular location is the cis-Golgi network. The protein localises to the golgi apparatus lumen. It is found in the endosome lumen. The protein resides in the cell surface. Functionally, molecular chaperone for LDL receptor-related proteins that may regulate their ligand binding activity along the secretory pathway. This Homo sapiens (Human) protein is Alpha-2-macroglobulin receptor-associated protein.